The primary structure comprises 317 residues: Malate dehydrogenase (317 aa).

NAD(+) is bound by residues 10–15 (GGGQIG) and Asp34. The substrate site is built by Arg83 and Arg89. Residues Asn96 and 119-121 (ISN) contribute to the NAD(+) site. Positions 121 and 152 each coordinate substrate. Catalysis depends on His176, which acts as the Proton acceptor.

This sequence belongs to the LDH/MDH superfamily. MDH type 3 family.

It carries out the reaction (S)-malate + NAD(+) = oxaloacetate + NADH + H(+). Its function is as follows. Catalyzes the reversible oxidation of malate to oxaloacetate. The sequence is that of Malate dehydrogenase from Citrifermentans bemidjiense (strain ATCC BAA-1014 / DSM 16622 / JCM 12645 / Bem) (Geobacter bemidjiensis).